We begin with the raw amino-acid sequence, 172 residues long: Translationally-controlled tumor protein (172 aa).

One can recognise a TCTP domain in the interval 1-172 (MIIYRDLISH…FKDGLEMEKC (172 aa)). S46 is modified (phosphoserine; by PLK1). S53 carries the phosphoserine modification. S64 is subject to Phosphoserine; by PLK1. A required for reduction of TSC22D1 protein stability region spans residues 70–172 (VDIVMNHHLQ…FKDGLEMEKC (103 aa)).

It belongs to the TCTP family. In terms of assembly, homodimer. Interacts with STEAP3. Interacts with TSC22D1; interaction results in the destabilization of TSC22D1 protein. Found in several healthy and tumoral cells including erythrocytes, hepatocytes, macrophages, platelets, keratinocytes, erythroleukemia cells, gliomas, melanomas, hepatoblastomas, and lymphomas. It cannot be detected in kidney and renal cell carcinoma (RCC). Expressed in placenta and prostate.

It localises to the cytoplasm. Its function is as follows. Involved in calcium binding and microtubule stabilization. Acts as a negative regulator of TSC22D1-mediated apoptosis, via interaction with and destabilization of TSC22D1 protein. This is Translationally-controlled tumor protein (TPT1) from Homo sapiens (Human).